The primary structure comprises 1256 residues: Splicing factor, arginine/serine-rich 19 (1256 aa).

6 disordered regions span residues 1–33 (MEEEDESRGKTEESGEDRGDGPPDRDPALSPSA), 158–343 (GKTV…APRR), 371–395 (ALSLPPLPPTDPEIEEGEIVQPEEE), 408–1030 (PRQP…TLPP), 1112–1152 (GSLP…DKYL), and 1221–1256 (FRKHGRKPGDPPGPPRPPKEPGPPDKGGPGLPLPPL). Residues 7–27 (SRGKTEESGEDRGDGPPDRDP) are compositionally biased toward basic and acidic residues. A compositionally biased stretch (low complexity) spans 192-206 (SSASSSPSPSPSSSS). A compositionally biased stretch (pro residues) spans 207-222 (PSPPPPPPPPPPPALP). Residues 227 to 236 (DIYDPFHPTD) show a composition bias toward basic and acidic residues. Phosphoserine is present on serine 240. Positions 255 to 265 (TGSNPSSSAGT) are enriched in polar residues. Residues 268–282 (PEEEEEEEEEEEEEG) show a composition bias toward acidic residues. At threonine 328 the chain carries Phosphothreonine. The span at 382–393 (PEIEEGEIVQPE) shows a compositional bias: acidic residues. Residues 412 to 424 (PASVATLASVAAP) are compositionally biased toward low complexity. A phosphoserine mark is found at serine 442 and serine 447. Basic residues predominate over residues 478–489 (KILTQRRERYRQ). Residues serine 491, serine 493, serine 510, serine 518, and serine 520 each carry the phosphoserine modification. 2 stretches are compositionally biased toward basic residues: residues 538-553 (TARRRSRSRSRRRSRS) and 560-577 (RGGHRSRSREKRRRRRRS). A phosphoserine mark is found at serine 577 and serine 579. The segment covering 592–611 (RERHRGKRREGGKKKKKRSR) has biased composition (basic residues). Basic and acidic residues predominate over residues 612–623 (SRAEKRSGDLEK). A Phosphothreonine modification is found at threonine 663. Phosphoserine occurs at positions 676 and 682. Position 689 is a phosphotyrosine (tyrosine 689). A phosphoserine mark is found at serine 691 and serine 695. Composition is skewed to basic and acidic residues over residues 696-709 (ADERGGKSDKDRRR) and 719-741 (SREKGSRRKALDGDRGRDRDRSS). 2 stretches are compositionally biased toward low complexity: residues 752–775 (PGSGPLPKAPPSSGSSSSSSSCSS) and 793–804 (SSTTPAKDSSSS). Lysine 812 is covalently cross-linked (Glycyl lysine isopeptide (Lys-Gly) (interchain with G-Cter in SUMO2)). The span at 813–831 (FSRDRESRSPFLKPDERAP) shows a compositional bias: basic and acidic residues. Phosphoserine is present on residues serine 819 and serine 821. The segment covering 843-875 (KPKKTKAKAKAGAKKAKGTKGKTKPSKTRKKVR) has biased composition (basic residues). 4 positions are modified to phosphoserine: serine 876, serine 883, serine 910, and serine 912. Pro residues predominate over residues 922–935 (STPPPKVAPPPPAL). 2 positions are modified to phosphothreonine: threonine 923 and threonine 936. Positions 938 to 947 (DSQTVDSSCK) are enriched in polar residues. Residue serine 939 is modified to Phosphoserine. Threonine 948 carries the post-translational modification Phosphothreonine. The segment covering 969 to 984 (EEEEEEEEEEEEEEEQ) has biased composition (acidic residues). Positions 985–1017 (QPATTTATSTAAAAPSTAPSAGSTAGDSGAEDG) are enriched in low complexity. Residues 1131–1256 (PASDKREGSS…GGPGLPLPPL (126 aa)) form a necessary for interaction with the CTD domain of POLR2A region. Over residues 1133–1152 (SDKREGSSSSEGRGDTDKYL) the composition is skewed to basic and acidic residues. Positions 1244-1256 (PDKGGPGLPLPPL) are enriched in pro residues.

This sequence belongs to the splicing factor SR family. As to quaternary structure, interacts with POLR2A.

It localises to the nucleus. Functionally, may function in pre-mRNA splicing. The chain is Splicing factor, arginine/serine-rich 19 (Scaf1) from Mus musculus (Mouse).